We begin with the raw amino-acid sequence, 710 residues long: Bifunctional sesterterpene synthase (710 aa).

The stellata-2,6,19-trien synthase stretch occupies residues M1–E327. Mg(2+)-binding residues include D92 and D96. Substrate-binding positions include D92, D96, R181–D184, and S229–E233. Positions D92–D96 match the DDXXD motif 1 motif. Positions Y278 to K286 match the NSE motif motif. Substrate is bound at residue R318 to Y319. Residues R328–N709 form a geranylgeranyl diphosphate synthase region. Residues H365–G404 form a disordered region. Residues V368 to T380 are compositionally biased toward polar residues. Isopentenyl diphosphate-binding residues include K430, R433, and H462. Residues D469 and D473 each coordinate Mg(2+). Residues D469–D473 carry the DDXXD motif 2 motif. R478 is a dimethylallyl diphosphate binding site. R479 provides a ligand contact to isopentenyl diphosphate. 6 residues coordinate dimethylallyl diphosphate: K556, T557, Q592, N599, K609, and K619.

This sequence in the C-terminal section; belongs to the FPP/GGPP synthase family. In the N-terminal section; belongs to the terpene synthase family. As to quaternary structure, hexamer.

The enzyme catalyses 4 isopentenyl diphosphate + dimethylallyl diphosphate = (2E,6E,10E,14E)-geranylfarnesyl diphosphate + 4 diphosphate. It catalyses the reaction (2E,6E,10E,14E)-geranylfarnesyl diphosphate = variecoladiene + diphosphate. It participates in secondary metabolite biosynthesis; terpenoid biosynthesis. In terms of biological role, multifunctional sesterterpene synthase; part of the gene cluster that mediates the biosynthesis of the sesterterpene variecolin. The first step in the pathway is performed by the variecoladiene synthase vrcA that possesses both prenyl transferase and terpene cyclase activity, converting isopentenyl diphosphate and dimethylallyl diphosphate into geranylfarnesyl pyrophosphate (GFPP) and then converting GFPP into the tetracyclic variecoladiene. The cytochrome P450 monooxygenase vrcB then catalyzes multiple oxidations at C-5 and C-20 positions to yield variecolin. The chain is Bifunctional sesterterpene synthase from Aspergillus aculeatus (strain ATCC 16872 / CBS 172.66 / WB 5094).